A 786-amino-acid polypeptide reads, in one-letter code: Endonuclease MutS2 (786 aa).

332–339 contacts ATP; the sequence is GPNTGGKT. The 76-residue stretch at 711–786 folds into the Smr domain; it reads IDLRGMDSEE…GTGVTVVILK (76 aa).

This sequence belongs to the DNA mismatch repair MutS family. MutS2 subfamily. As to quaternary structure, homodimer. Binds to stalled ribosomes, contacting rRNA.

Endonuclease that is involved in the suppression of homologous recombination and thus may have a key role in the control of bacterial genetic diversity. Functionally, acts as a ribosome collision sensor, splitting the ribosome into its 2 subunits. Detects stalled/collided 70S ribosomes which it binds and splits by an ATP-hydrolysis driven conformational change. Acts upstream of the ribosome quality control system (RQC), a ribosome-associated complex that mediates the extraction of incompletely synthesized nascent chains from stalled ribosomes and their subsequent degradation. Probably generates substrates for RQC. The sequence is that of Endonuclease MutS2 from Clostridium perfringens (strain ATCC 13124 / DSM 756 / JCM 1290 / NCIMB 6125 / NCTC 8237 / Type A).